We begin with the raw amino-acid sequence, 512 residues long: Sodium-dependent phosphate transport protein 1, chloroplastic (512 aa).

The N-terminal 59 residues, Met-1–Arg-59, are a transit peptide targeting the chloroplast. Helical transmembrane passes span Trp-103–Met-123, Val-141–Ile-161, Val-171–Lys-191, Leu-192–Met-212, Leu-234–Ile-254, Phe-257–Trp-277, Val-323–Trp-343, Leu-361–Ala-381, Ile-401–Met-421, Gly-453–Ala-473, and Val-486–Thr-506.

This sequence belongs to the major facilitator superfamily. Sodium/anion cotransporter (TC 2.A.1.14) family. In terms of tissue distribution, expressed in flower buds, sepals of mature flowers and mature leaves, less in senescent leaves and at low levels in roots.

The protein resides in the plastid. It is found in the chloroplast thylakoid membrane. Specific for inorganic phosphate transport across the thylakoid membrane in a sodium dependent manner. Binds glutamate but cannot transport it. May act as an ascorbate transporter at the thylakoid membrane. This is Sodium-dependent phosphate transport protein 1, chloroplastic (ANTR1) from Arabidopsis thaliana (Mouse-ear cress).